The chain runs to 435 residues: Trigger factor (435 aa).

The PPIase FKBP-type domain maps to 163-248; it reads GDFVTFDFKG…VKEIKVKELP (86 aa).

The protein belongs to the FKBP-type PPIase family. Tig subfamily.

The protein localises to the cytoplasm. It carries out the reaction [protein]-peptidylproline (omega=180) = [protein]-peptidylproline (omega=0). Functionally, involved in protein export. Acts as a chaperone by maintaining the newly synthesized protein in an open conformation. Functions as a peptidyl-prolyl cis-trans isomerase. The polypeptide is Trigger factor (Geobacter sp. (strain M21)).